The sequence spans 498 residues: Type II secretion system protein E (498 aa).

Residue 261-268 participates in ATP binding; that stretch reads GPTGSGKS. Zn(2+)-binding residues include Cys-394, Cys-397, Cys-425, and Cys-428.

It belongs to the GSP E family. Forms homooligomers; most probably hexamers. Interacts with OutL/GspL. It depends on Zn(2+) as a cofactor.

Its subcellular location is the cell inner membrane. The catalysed reaction is ATP + H2O + cellular proteinSide 1 = ADP + phosphate + cellular proteinSide 2.. Its function is as follows. ATPase component of the type II secretion system required for the energy-dependent secretion of extracellular factors such as proteases and toxins from the periplasm. Acts as a molecular motor to provide the energy that is required for assembly of the pseudopilus and the extrusion of substrates generated in the cytoplasm. This chain is Type II secretion system protein E (outE), found in Pectobacterium carotovorum subsp. carotovorum (Erwinia carotovora subsp. carotovora).